The following is a 166-amino-acid chain: Regulatory protein RecX (166 aa).

The protein belongs to the RecX family.

The protein resides in the cytoplasm. Its function is as follows. Modulates RecA activity. The sequence is that of Regulatory protein RecX from Salmonella choleraesuis (strain SC-B67).